We begin with the raw amino-acid sequence, 804 residues long: Leucine--tRNA ligase (804 aa).

The short motif at 40-51 is the 'HIGH' region element; sequence PYPSGAGLHVGH. Residues 576-580 carry the 'KMSKS' region motif; sequence KMSKS. ATP is bound at residue lysine 579.

Belongs to the class-I aminoacyl-tRNA synthetase family.

It is found in the cytoplasm. The catalysed reaction is tRNA(Leu) + L-leucine + ATP = L-leucyl-tRNA(Leu) + AMP + diphosphate. The chain is Leucine--tRNA ligase from Staphylococcus haemolyticus (strain JCSC1435).